The chain runs to 391 residues: 3-ketoacyl-CoA thiolase (391 aa).

Cys95 acts as the Acyl-thioester intermediate in catalysis. Residues His347 and Cys377 each act as proton acceptor in the active site.

The protein belongs to the thiolase-like superfamily. Thiolase family. In terms of assembly, heterotetramer of two alpha chains (FadB) and two beta chains (FadA).

It localises to the cytoplasm. The catalysed reaction is an acyl-CoA + acetyl-CoA = a 3-oxoacyl-CoA + CoA. Its pathway is lipid metabolism; fatty acid beta-oxidation. Its function is as follows. Catalyzes the final step of fatty acid oxidation in which acetyl-CoA is released and the CoA ester of a fatty acid two carbons shorter is formed. The sequence is that of 3-ketoacyl-CoA thiolase from Pseudomonas entomophila (strain L48).